A 315-amino-acid polypeptide reads, in one-letter code: Putative methyltransferase NSUN5C (315 aa).

Residues 50–56 (VPPQAIK), aspartate 74, arginine 79, and aspartate 121 each bind S-adenosyl-L-methionine. Catalysis depends on cysteine 175, which acts as the Nucleophile. The disordered stretch occupies residues 245–269 (TSASQAKASAPERTPSPAPKRKKRA).

This sequence belongs to the class I-like SAM-binding methyltransferase superfamily. RsmB/NOP family. Ubiquitous.

Functionally, may have S-adenosyl-L-methionine-dependent methyl-transferase activity. This Homo sapiens (Human) protein is Putative methyltransferase NSUN5C (NSUN5P2).